The sequence spans 618 residues: F-box/LRR-repeat protein At3g58940 (618 aa).

In terms of domain architecture, F-box spans 1-47; it reads MDRVSNLPEEVRCHILSFLPTKHAALTSVLSKSWLNLWKFETNLDID. LRR repeat units follow at residues 147 to 176, 196 to 223, 224 to 249, 282 to 313, 314 to 339, and 354 to 379; these read LKLR…NIDS, EVHM…SIHG, TGVE…NYSD, TLYL…GLKS, DEGR…IIEG, and CISR…GFRG. A disordered region spans residues 587-618; sequence ATDSERAETSSNQEMTELGQATATYFPPREGE. The segment covering 595-609 has biased composition (polar residues); that stretch reads TSSNQEMTELGQATA.

This chain is F-box/LRR-repeat protein At3g58940, found in Arabidopsis thaliana (Mouse-ear cress).